The following is a 703-amino-acid chain: Cycloartenol synthase (703 aa).

PFTB repeat units follow at residues 59–103 (IKKA…QLPE) and 106–148 (QREI…RLLG). Catalysis depends on D435, which acts as the Proton donor. PFTB repeat units lie at residues 461 to 503 (IADG…QNIM), 539 to 579 (IARG…VASG), 587 to 628 (IVKA…VNTG), and 645 to 686 (IERG…KNIF).

It belongs to the terpene cyclase/mutase family.

It carries out the reaction (S)-2,3-epoxysqualene = cycloartenol. In terms of biological role, converts oxidosqualene to cycloartenol (in vitro). The sequence is that of Cycloartenol synthase (cas1) from Dictyostelium discoideum (Social amoeba).